The primary structure comprises 288 residues: Glucose uptake protein GlcU (288 aa).

10 consecutive transmembrane segments (helical) span residues 4-26, 33-51, 56-75, 82-104, 114-136, 148-170, 180-197, 206-225, 230-252, and 264-283; these read LIAL…VGGG, GTTF…TGNA, LTII…GQGY, LIGV…TLFS, GVQV…LTSI, NFGK…VVVA, ALFF…ILSA, TLWN…FMFY, VGVA…GGIF, and IGIW…SEIL.

Belongs to the GRP transporter (TC 2.A.7.5) family.

The protein localises to the cell membrane. Its function is as follows. Involved in the uptake of glucose. This is Glucose uptake protein GlcU (glcU) from Staphylococcus xylosus.